The chain runs to 201 residues: Small ribosomal subunit protein uS4c (201 aa).

Positions 20 to 44 are disordered; that stretch reads GLTSKRPRAGSDLRNQSRSGKKSQY. The region spanning 89-152 is the S4 RNA-binding domain; sequence MRLDNILFRL…NSRTLVQNLL (64 aa).

It belongs to the universal ribosomal protein uS4 family. In terms of assembly, part of the 30S ribosomal subunit. Contacts protein S5. The interaction surface between S4 and S5 is involved in control of translational fidelity.

Its subcellular location is the plastid. It localises to the chloroplast. Functionally, one of the primary rRNA binding proteins, it binds directly to 16S rRNA where it nucleates assembly of the body of the 30S subunit. With S5 and S12 plays an important role in translational accuracy. This Arabis hirsuta (Hairy rock-cress) protein is Small ribosomal subunit protein uS4c (rps4).